We begin with the raw amino-acid sequence, 669 residues long: Translation factor GUF1, mitochondrial (669 aa).

The N-terminal 49 residues, 1-49 (MWTLAGQGWWRGRALAAWVTEAARKGLLWPHLAPARGTAAESRAPDRCY), are a transit peptide targeting the mitochondrion. The region spanning 66–247 (ENTRNFSIIA…AVIKRIPFPK (182 aa)) is the tr-type G domain. GTP-binding positions include 75 to 82 (AHVDHGKS), 140 to 144 (DTPGH), and 194 to 197 (NKID).

This sequence belongs to the TRAFAC class translation factor GTPase superfamily. Classic translation factor GTPase family. LepA subfamily.

Its subcellular location is the mitochondrion inner membrane. It catalyses the reaction GTP + H2O = GDP + phosphate + H(+). Its function is as follows. Promotes mitochondrial protein synthesis. May act as a fidelity factor of the translation reaction, by catalyzing a one-codon backward translocation of tRNAs on improperly translocated ribosomes. Binds to mitochondrial ribosomes in a GTP-dependent manner. This chain is Translation factor GUF1, mitochondrial, found in Bos taurus (Bovine).